A 1490-amino-acid polypeptide reads, in one-letter code: DNA-directed RNA polymerase subunit beta' (1490 aa).

Zn(2+) is bound by residues Cys67, Cys69, Cys82, and Cys85. Mg(2+) is bound by residues Asp499, Asp501, and Asp503. 4 residues coordinate Zn(2+): Cys868, Cys944, Cys951, and Cys954.

This sequence belongs to the RNA polymerase beta' chain family. In terms of assembly, the RNAP catalytic core consists of 2 alpha, 1 beta, 1 beta' and 1 omega subunit. When a sigma factor is associated with the core the holoenzyme is formed, which can initiate transcription. The cofactor is Mg(2+). Zn(2+) is required as a cofactor.

The catalysed reaction is RNA(n) + a ribonucleoside 5'-triphosphate = RNA(n+1) + diphosphate. Functionally, DNA-dependent RNA polymerase catalyzes the transcription of DNA into RNA using the four ribonucleoside triphosphates as substrates. This is DNA-directed RNA polymerase subunit beta' from Chlorobaculum tepidum (strain ATCC 49652 / DSM 12025 / NBRC 103806 / TLS) (Chlorobium tepidum).